The primary structure comprises 1112 residues: DNA-directed RNA polymerase subunit beta (1112 aa).

The disordered stretch occupies residues 1087-1112 (VGGRRTPNRPTYENIGGPREMEFSED).

The protein belongs to the RNA polymerase beta chain family. In terms of assembly, in cyanobacteria the RNAP catalytic core is composed of 2 alpha, 1 beta, 1 beta', 1 gamma and 1 omega subunit. When a sigma factor is associated with the core the holoenzyme is formed, which can initiate transcription.

The catalysed reaction is RNA(n) + a ribonucleoside 5'-triphosphate = RNA(n+1) + diphosphate. Functionally, DNA-dependent RNA polymerase catalyzes the transcription of DNA into RNA using the four ribonucleoside triphosphates as substrates. In Gloeobacter violaceus (strain ATCC 29082 / PCC 7421), this protein is DNA-directed RNA polymerase subunit beta.